The chain runs to 621 residues: Zinc metalloproteinase-disintegrin-like TSV-DM (621 aa).

The N-terminal stretch at 1-20 (MIQVLLVTICLAVFPYQGSS) is a signal peptide. The propeptide occupies 21–191 (IILESGNVND…EASQSNLTPE (171 aa)). Gln192 is modified (pyrrolidone carboxylic acid). Positions 200–396 (KYVKFFLVAD…NMPQCILKKP (197 aa)) constitute a Peptidase M12B domain. N-linked (GlcNAc...) asparagine glycosylation is present at Asn219. 3 disulfide bridges follow: Cys311/Cys391, Cys351/Cys375, and Cys353/Cys358. Position 336 (His336) interacts with Zn(2+). Glu337 is an active-site residue. His340 and His346 together coordinate Zn(2+). In terms of domain architecture, Disintegrin spans 404–489 (PPVCGNYFVE…AECTDRFQRN (86 aa)). Residues Val406, Asn409, Phe411, Glu413, Glu416, and Asp419 each contribute to the Ca(2+) site. Disulfide bonds link Cys407–Cys436, Cys418–Cys431, Cys420–Cys426, Cys430–Cys453, Cys444–Cys450, Cys449–Cys475, Cys462–Cys482, Cys469–Cys500, Cys493–Cys505, Cys512–Cys562, Cys527–Cys573, Cys540–Cys550, Cys557–Cys599, and Cys593–Cys605. The D/ECD-tripeptide signature appears at 468–470 (ECD). Residues Asp470, Met471, Asp473, Asp484, and Arg485 each contribute to the Ca(2+) site. N-linked (GlcNAc...) asparagine glycosylation occurs at Asn502.

Belongs to the venom metalloproteinase (M12B) family. P-III subfamily. P-IIIc sub-subfamily. As to quaternary structure, homodimer; disulfide-linked. Requires Zn(2+) as cofactor. The N-terminus is blocked. Expressed by the venom gland.

It is found in the secreted. With respect to regulation, inhibited by EDTA and DTT, and partially inhibited by EGTA, but not inhibited by PMSF and NEM. Its function is as follows. Snake venom zinc metalloprotease that hydrolyzes the alpha-chain (FGA) and more slowly the beta-chain (FGB) of fibrinogen. Inhibits cell proliferation and induces cell morphologic changes transiently on human umbilical vein endothelial cells. The polypeptide is Zinc metalloproteinase-disintegrin-like TSV-DM (Trimeresurus stejnegeri (Chinese green tree viper)).